The sequence spans 376 residues: Carbamoyl phosphate synthase small chain (376 aa).

The tract at residues 1–187 is CPSase; that stretch reads MRAFLALEDG…AADGAYAWPG (187 aa). L-glutamine contacts are provided by S45, G239, and G241. One can recognise a Glutamine amidotransferase type-1 domain in the interval 191-376; it reads RLVVYDYGIK…RGMVREAVGR (186 aa). The active-site Nucleophile is the C266. L-glutamine-binding residues include L267, Q270, N308, G310, and F311. Residues H349 and E351 contribute to the active site.

Belongs to the CarA family. Composed of two chains; the small (or glutamine) chain promotes the hydrolysis of glutamine to ammonia, which is used by the large (or ammonia) chain to synthesize carbamoyl phosphate. Tetramer of heterodimers (alpha,beta)4.

It catalyses the reaction hydrogencarbonate + L-glutamine + 2 ATP + H2O = carbamoyl phosphate + L-glutamate + 2 ADP + phosphate + 2 H(+). It carries out the reaction L-glutamine + H2O = L-glutamate + NH4(+). It participates in amino-acid biosynthesis; L-arginine biosynthesis; carbamoyl phosphate from bicarbonate: step 1/1. It functions in the pathway pyrimidine metabolism; UMP biosynthesis via de novo pathway; (S)-dihydroorotate from bicarbonate: step 1/3. Its function is as follows. Small subunit of the glutamine-dependent carbamoyl phosphate synthetase (CPSase). CPSase catalyzes the formation of carbamoyl phosphate from the ammonia moiety of glutamine, carbonate, and phosphate donated by ATP, constituting the first step of 2 biosynthetic pathways, one leading to arginine and/or urea and the other to pyrimidine nucleotides. The small subunit (glutamine amidotransferase) binds and cleaves glutamine to supply the large subunit with the substrate ammonia. The sequence is that of Carbamoyl phosphate synthase small chain from Nitratidesulfovibrio vulgaris (strain DSM 19637 / Miyazaki F) (Desulfovibrio vulgaris).